Here is a 148-residue protein sequence, read N- to C-terminus: Transcriptional regulator MraZ (148 aa).

SpoVT-AbrB domains follow at residues 7–56 (KERH…EPDI) and 85–128 (LDVV…APER).

This sequence belongs to the MraZ family. As to quaternary structure, forms oligomers.

It localises to the cytoplasm. The protein localises to the nucleoid. This chain is Transcriptional regulator MraZ, found in Chlorobium phaeobacteroides (strain DSM 266 / SMG 266 / 2430).